We begin with the raw amino-acid sequence, 177 residues long: Large ribosomal subunit protein eL20 (177 aa).

This sequence belongs to the eukaryotic ribosomal protein eL20 family.

The polypeptide is Large ribosomal subunit protein eL20 (RpL18A) (Drosophila melanogaster (Fruit fly)).